The following is a 715-amino-acid chain: Polyribonucleotide nucleotidyltransferase (715 aa).

Residues Asp497 and Asp503 each contribute to the Mg(2+) site. Residues 564 to 623 (PRLLTMKIDPEQIGLVIGPGGKTIKSITEQTGSKIDIADDGTVTIAAIQAKKAERARDLI) enclose the KH domain. Residues 633–701 (GEVYLGRVTR…NKGRLNLTRL (69 aa)) enclose the S1 motif domain.

Belongs to the polyribonucleotide nucleotidyltransferase family. The cofactor is Mg(2+).

Its subcellular location is the cytoplasm. The enzyme catalyses RNA(n+1) + phosphate = RNA(n) + a ribonucleoside 5'-diphosphate. Its function is as follows. Involved in mRNA degradation. Catalyzes the phosphorolysis of single-stranded polyribonucleotides processively in the 3'- to 5'-direction. The protein is Polyribonucleotide nucleotidyltransferase of Crocosphaera subtropica (strain ATCC 51142 / BH68) (Cyanothece sp. (strain ATCC 51142)).